The primary structure comprises 447 residues: Glutamyl-tRNA(Gln) amidotransferase subunit A (447 aa).

Active-site charge relay system residues include lysine 51 and serine 126. The Acyl-ester intermediate role is filled by serine 150.

This sequence belongs to the amidase family. GatA subfamily. In terms of assembly, heterotrimer of A, B and C subunits.

The catalysed reaction is L-glutamyl-tRNA(Gln) + L-glutamine + ATP + H2O = L-glutaminyl-tRNA(Gln) + L-glutamate + ADP + phosphate + H(+). Functionally, allows the formation of correctly charged Gln-tRNA(Gln) through the transamidation of misacylated Glu-tRNA(Gln) in organisms which lack glutaminyl-tRNA synthetase. The reaction takes place in the presence of glutamine and ATP through an activated gamma-phospho-Glu-tRNA(Gln). The polypeptide is Glutamyl-tRNA(Gln) amidotransferase subunit A (Helicobacter hepaticus (strain ATCC 51449 / 3B1)).